Consider the following 173-residue polypeptide: Inorganic pyrophosphatase (173 aa).

Residues K29, R43, and Y55 each coordinate substrate. Mg(2+) contacts are provided by D65, D70, and D102. Y141 serves as a coordination point for substrate.

It belongs to the PPase family. As to quaternary structure, homohexamer. Mg(2+) serves as cofactor.

It localises to the cytoplasm. The catalysed reaction is diphosphate + H2O = 2 phosphate + H(+). Its function is as follows. Catalyzes the hydrolysis of inorganic pyrophosphate (PPi) forming two phosphate ions. This Rickettsia conorii (strain ATCC VR-613 / Malish 7) protein is Inorganic pyrophosphatase.